The sequence spans 669 residues: Leucine zipper putative tumor suppressor 2 (669 aa).

Positions 1-25 (MAIVQTLPVPLEPAPEAATAPQAPV) are enriched in low complexity. Disordered stretches follow at residues 1–56 (MAIV…PTFF), 92–131 (NEDFRTESPPSPSSDVEDAREQRAHNAHLRGPPPKLIPVS), 150–201 (PVLP…AADK), and 215–323 (GTLS…SDEA). Positions 1–332 (MAIVQTLPVP…ALLHCVLEGK (332 aa)) are required for centrosomal localization. The segment covering 172–181 (LSGSQGSLTQ) has biased composition (polar residues). Residues 187-199 (ASSSSSSSSSSAA) are compositionally biased toward low complexity. The span at 215–233 (GTLSDSGRNSLSSLPTYST) shows a compositional bias: polar residues. 2 stretches are compositionally biased toward low complexity: residues 241–251 (SSPGGHLPSHG) and 267–283 (GPSHSDSGRSSSSKSTG). A Phosphoserine modification is found at Ser249. Residues 284–295 (SLGGRVAGGLLG) are compositionally biased toward gly residues. Phosphoserine is present on Ser296. Residues 298 to 308 (TRASPDSSSCG) are compositionally biased toward polar residues. Pro residues predominate over residues 311–320 (SPPPPPPPPS). Residues 328–649 (VLEGKLRDRE…LELEARELAD (322 aa)) are a coiled coil. The segment at 447 to 669 (SGEISLLKQQ…CLEEITATEI (223 aa)) is sufficient for interaction with CTNNB1. Residues 450 to 669 (ISLLKQQLKE…CLEEITATEI (220 aa)) are sufficient for interaction with KATNB1 and for inhibition of katanin-mediated microtubule severing. Residue Ser570 is modified to Phosphoserine. The Nuclear export signal motif lies at 631 to 640 (LEQELQQLSL).

It belongs to the LZTS2 family. As to quaternary structure, interacts with KATNB1. Also interacts with CTNNB1, gamma-tubulin and KIF23. In terms of tissue distribution, highly expressed in prostate and testis, and at slightly lower levels in spleen, thymus, uterus, small intestine and colon.

The protein localises to the cytoplasm. It is found in the cytoskeleton. It localises to the microtubule organizing center. The protein resides in the centrosome. In terms of biological role, negative regulator of katanin-mediated microtubule severing and release from the centrosome. Required for central spindle formation and the completion of cytokinesis. May negatively regulate axonal outgrowth by preventing the formation of microtubule bundles that are necessary for transport within the elongating axon. Negative regulator of the Wnt signaling pathway. Represses beta-catenin-mediated transcriptional activation by promoting the nuclear exclusion of beta-catenin. The polypeptide is Leucine zipper putative tumor suppressor 2 (Homo sapiens (Human)).